We begin with the raw amino-acid sequence, 1165 residues long: DNA-directed RNA polymerase subunit beta (1165 aa).

This sequence belongs to the RNA polymerase beta chain family. As to quaternary structure, the RNAP catalytic core consists of 2 alpha, 1 beta, 1 beta' and 1 omega subunit. When a sigma factor is associated with the core the holoenzyme is formed, which can initiate transcription.

It carries out the reaction RNA(n) + a ribonucleoside 5'-triphosphate = RNA(n+1) + diphosphate. DNA-dependent RNA polymerase catalyzes the transcription of DNA into RNA using the four ribonucleoside triphosphates as substrates. The sequence is that of DNA-directed RNA polymerase subunit beta from Corynebacterium glutamicum (strain R).